Reading from the N-terminus, the 439-residue chain is Xylose isomerase (439 aa).

Catalysis depends on residues His-101 and Asp-104. Mg(2+) is bound by residues Glu-232, Glu-268, His-271, Asp-296, Asp-307, Asp-309, and Asp-339.

The protein belongs to the xylose isomerase family. Homotetramer. Mg(2+) serves as cofactor.

Its subcellular location is the cytoplasm. The catalysed reaction is alpha-D-xylose = alpha-D-xylulofuranose. This is Xylose isomerase from Haemophilus influenzae (strain 86-028NP).